Reading from the N-terminus, the 75-residue chain is Small ribosomal subunit protein bS18 (75 aa).

This sequence belongs to the bacterial ribosomal protein bS18 family. As to quaternary structure, part of the 30S ribosomal subunit. Forms a tight heterodimer with protein bS6.

Functionally, binds as a heterodimer with protein bS6 to the central domain of the 16S rRNA, where it helps stabilize the platform of the 30S subunit. The polypeptide is Small ribosomal subunit protein bS18 (Desulforudis audaxviator (strain MP104C)).